A 712-amino-acid chain; its full sequence is Eukaryotic translation initiation factor 3 subunit B (712 aa).

Methionine 1 carries the post-translational modification N-acetylmethionine. The RRM domain maps to 56-143 (NIIVVDHLPV…HIFAVNMFDD (88 aa)).

Belongs to the eIF-3 subunit B family. As to quaternary structure, component of the eukaryotic translation initiation factor 3 (eIF-3) complex, which is composed of at least 13 different subunits. Binds to the translation initiation factor TIF3H1.

Its subcellular location is the cytoplasm. In terms of biological role, RNA-binding component of the eukaryotic translation initiation factor 3 (eIF-3) complex, which is involved in protein synthesis of a specialized repertoire of mRNAs and, together with other initiation factors, stimulates binding of mRNA and methionyl-tRNAi to the 40S ribosome. The eIF-3 complex specifically targets and initiates translation of a subset of mRNAs involved in cell proliferation. This is Eukaryotic translation initiation factor 3 subunit B (TIF3B1) from Arabidopsis thaliana (Mouse-ear cress).